A 489-amino-acid chain; its full sequence is Betaine aldehyde dehydrogenase (489 aa).

2 residues coordinate K(+): threonine 26 and aspartate 93. 150–152 (GAW) contacts NAD(+). Lysine 162 acts as the Charge relay system in catalysis. NAD(+) is bound at residue 176–179 (KPSE). Valine 180 is a K(+) binding site. 229 to 232 (GVET) is a binding site for NAD(+). Leucine 245 is a binding site for K(+). Catalysis depends on glutamate 251, which acts as the Proton acceptor. NAD(+) is bound by residues glycine 253, cysteine 285, and glutamate 386. Catalysis depends on cysteine 285, which acts as the Nucleophile. Cysteine 285 is subject to Cysteine sulfenic acid (-SOH). Residues lysine 456 and glycine 459 each contribute to the K(+) site. The active-site Charge relay system is glutamate 463.

It belongs to the aldehyde dehydrogenase family. In terms of assembly, dimer of dimers. The cofactor is K(+).

It carries out the reaction betaine aldehyde + NAD(+) + H2O = glycine betaine + NADH + 2 H(+). The protein operates within amine and polyamine biosynthesis; betaine biosynthesis via choline pathway; betaine from betaine aldehyde: step 1/1. Functionally, involved in the biosynthesis of the osmoprotectant glycine betaine. Catalyzes the irreversible oxidation of betaine aldehyde to the corresponding acid. This is Betaine aldehyde dehydrogenase from Burkholderia ambifaria (strain MC40-6).